The sequence spans 807 residues: Glycerol-3-phosphate acyltransferase (807 aa).

The short motif at Cys305 to Met310 is the HXXXXD motif element.

It belongs to the GPAT/DAPAT family.

It localises to the cell inner membrane. The catalysed reaction is sn-glycerol 3-phosphate + an acyl-CoA = a 1-acyl-sn-glycero-3-phosphate + CoA. The protein operates within phospholipid metabolism; CDP-diacylglycerol biosynthesis; CDP-diacylglycerol from sn-glycerol 3-phosphate: step 1/3. This is Glycerol-3-phosphate acyltransferase from Escherichia coli O139:H28 (strain E24377A / ETEC).